We begin with the raw amino-acid sequence, 877 residues long: Alanine--tRNA ligase (877 aa).

Zn(2+)-binding residues include His-562, His-566, Cys-664, and His-668.

Belongs to the class-II aminoacyl-tRNA synthetase family. Zn(2+) serves as cofactor.

It localises to the cytoplasm. The catalysed reaction is tRNA(Ala) + L-alanine + ATP = L-alanyl-tRNA(Ala) + AMP + diphosphate. Its function is as follows. Catalyzes the attachment of alanine to tRNA(Ala) in a two-step reaction: alanine is first activated by ATP to form Ala-AMP and then transferred to the acceptor end of tRNA(Ala). Also edits incorrectly charged Ser-tRNA(Ala) and Gly-tRNA(Ala) via its editing domain. The protein is Alanine--tRNA ligase of Picosynechococcus sp. (strain ATCC 27264 / PCC 7002 / PR-6) (Agmenellum quadruplicatum).